The primary structure comprises 369 residues: Flagellar P-ring protein (369 aa).

Residues 1-22 form the signal peptide; that stretch reads MLNFKHLMAAALLLSTSLGVQA.

It belongs to the FlgI family. As to quaternary structure, the basal body constitutes a major portion of the flagellar organelle and consists of four rings (L,P,S, and M) mounted on a central rod.

It localises to the periplasm. Its subcellular location is the bacterial flagellum basal body. Assembles around the rod to form the L-ring and probably protects the motor/basal body from shearing forces during rotation. In Pseudomonas fluorescens (strain ATCC BAA-477 / NRRL B-23932 / Pf-5), this protein is Flagellar P-ring protein.